A 121-amino-acid polypeptide reads, in one-letter code: Large ribosomal subunit protein eL18 (121 aa).

The protein belongs to the eukaryotic ribosomal protein eL18 family.

The sequence is that of Large ribosomal subunit protein eL18 from Methanothermobacter thermautotrophicus (strain ATCC 29096 / DSM 1053 / JCM 10044 / NBRC 100330 / Delta H) (Methanobacterium thermoautotrophicum).